Reading from the N-terminus, the 275-residue chain is Exosome complex component RRP40 (275 aa).

At Ala2 the chain carries N-acetylalanine. Lys151 participates in a covalent cross-link: Glycyl lysine isopeptide (Lys-Gly) (interchain with G-Cter in SUMO2).

The protein belongs to the RRP40 family. In terms of assembly, component of the RNA exosome core complex (Exo-9), composed of EXOSC1, EXOSC2, EXOSC3, EXOSC4, EXOSC5, EXOSC6, EXOSC7, EXOSC8 and EXOSC9; within the complex interacts with EXOSC5 and EXOSC9. The catalytically inactive RNA exosome core complex (Exo-9) associates with the catalytic subunit EXOSC10/RRP6. Exo-9 may associate with DIS3 to form the nucleolar exosome complex, or DIS3L to form the cytoplasmic exosome complex. Exo-9 is formed by a hexameric base ring consisting of the heterodimers EXOSC4-EXOSC9, EXOSC5-EXOSC8 and EXOSC6-EXOSC7, and a cap ring consisting of EXOSC1, EXOSC2 and EXOSC3. The RNA exosome complex associates with cofactors C1D/RRP47, MPHOSPH6/MPP6 and MTREX/MTR4. Interacts with MPHOSPH6/MPP6; the interaction is direct. Interacts with GTPBP1. Interacts with ZC3HAV1. Interacts with DDX17 only in the presence of ZC3HAV1 in an RNA-independent manner. Interacts with DHX36; this interaction occurs in a RNase-insensitive manner. Interacts with HBS1L isoform 2.

The protein localises to the cytoplasm. It localises to the nucleus. It is found in the nucleolus. Non-catalytic component of the RNA exosome complex which has 3'-&gt;5' exoribonuclease activity and participates in a multitude of cellular RNA processing and degradation events. In the nucleus, the RNA exosome complex is involved in proper maturation of stable RNA species such as rRNA, snRNA and snoRNA, in the elimination of RNA processing by-products and non-coding 'pervasive' transcripts, such as antisense RNA species and promoter-upstream transcripts (PROMPTs), and of mRNAs with processing defects, thereby limiting or excluding their export to the cytoplasm. The RNA exosome may be involved in Ig class switch recombination (CSR) and/or Ig variable region somatic hypermutation (SHM) by targeting AICDA deamination activity to transcribed dsDNA substrates. In the cytoplasm, the RNA exosome complex is involved in general mRNA turnover and specifically degrades inherently unstable mRNAs containing AU-rich elements (AREs) within their 3' untranslated regions, and in RNA surveillance pathways, preventing translation of aberrant mRNAs. It seems to be involved in degradation of histone mRNA. The catalytic inactive RNA exosome core complex of 9 subunits (Exo-9) is proposed to play a pivotal role in the binding and presentation of RNA for ribonucleolysis, and to serve as a scaffold for the association with catalytic subunits and accessory proteins or complexes. EXOSC3 as peripheral part of the Exo-9 complex stabilizes the hexameric ring of RNase PH-domain subunits through contacts with EXOSC9 and EXOSC5. The protein is Exosome complex component RRP40 (EXOSC3) of Bos taurus (Bovine).